A 65-amino-acid chain; its full sequence is Movement protein TGBp3 (65 aa).

Over 1-3 the chain is Lumenal; it reads MQA. The chain crosses the membrane as a helical span at residues 4–24; sequence SGLILVALFSAVVSYLALLHL. The Cytoplasmic portion of the chain corresponds to 25-65; the sequence is SSSSSSCVVVVTGESFRISGCDFTEEFIGFAKTLRVANSQP.

The protein belongs to the Tymovirales TGBp3 protein family.

Its subcellular location is the host endoplasmic reticulum membrane. Its function is as follows. Plays a role in viral cell-to-cell propagation, by facilitating genome transport to neighboring plant cells through plasmosdesmata. May induce the formation of granular vesicles derived from the Endoplasmic reticulum, which align on actin filaments. The protein is Movement protein TGBp3 of Carnation latent virus (CLV).